The primary structure comprises 140 residues: Large-conductance mechanosensitive channel (140 aa).

The next 2 helical transmembrane spans lie at valine 16–isoleucine 36 and glycine 86–valine 106.

It belongs to the MscL family. Homopentamer.

It is found in the cell inner membrane. In terms of biological role, channel that opens in response to stretch forces in the membrane lipid bilayer. May participate in the regulation of osmotic pressure changes within the cell. The protein is Large-conductance mechanosensitive channel of Anaeromyxobacter sp. (strain K).